A 103-amino-acid polypeptide reads, in one-letter code: Flagellar hook-basal body complex protein FliE (103 aa).

The protein belongs to the FliE family.

The protein localises to the bacterial flagellum basal body. The protein is Flagellar hook-basal body complex protein FliE of Cronobacter sakazakii (strain ATCC BAA-894) (Enterobacter sakazakii).